The sequence spans 209 residues: Uracil phosphoribosyltransferase (209 aa).

5-phospho-alpha-D-ribose 1-diphosphate is bound by residues R79, R104, and 131-139; that span reads DPMLATGGS. Residues I194 and 199–201 contribute to the uracil site; that span reads GDA. Position 200 (D200) interacts with 5-phospho-alpha-D-ribose 1-diphosphate.

Belongs to the UPRTase family. It depends on Mg(2+) as a cofactor.

It catalyses the reaction UMP + diphosphate = 5-phospho-alpha-D-ribose 1-diphosphate + uracil. The protein operates within pyrimidine metabolism; UMP biosynthesis via salvage pathway; UMP from uracil: step 1/1. Its activity is regulated as follows. Allosterically activated by GTP. Functionally, catalyzes the conversion of uracil and 5-phospho-alpha-D-ribose 1-diphosphate (PRPP) to UMP and diphosphate. In Macrococcus caseolyticus (strain JCSC5402) (Macrococcoides caseolyticum), this protein is Uracil phosphoribosyltransferase.